Here is a 261-residue protein sequence, read N- to C-terminus: Yop proteins translocation protein T (261 aa).

7 helical membrane-spanning segments follow: residues 20–40 (FMAC…GVLL), 44–64 (IVCS…YIEV), 77–97 (IILG…LESA), 131–151 (TLIT…ALFH), 180–200 (ILLI…LAEF), 214–234 (VFVL…VIYC), and 239–259 (SHAS…IPVL).

The protein belongs to the FliR/MopE/SpaR family.

Its subcellular location is the cell membrane. In terms of biological role, component of the yop secretion machinery. The sequence is that of Yop proteins translocation protein T (yscT) from Yersinia pestis.